Consider the following 77-residue polypeptide: Sec-independent protein translocase protein TatA 2 (77 aa).

The chain crosses the membrane as a helical span at residues 2–22 (FPGGISMTELIIILAVILLLF). Residues 52–77 (KEVKAEDVKTEERKEEKKEEKEKVEA) are disordered.

It belongs to the TatA/E family. As to quaternary structure, forms a complex with TatC.

The protein localises to the cell inner membrane. Part of the twin-arginine translocation (Tat) system that transports large folded proteins containing a characteristic twin-arginine motif in their signal peptide across membranes. TatA could form the protein-conducting channel of the Tat system. The protein is Sec-independent protein translocase protein TatA 2 of Aquifex aeolicus (strain VF5).